A 360-amino-acid chain; its full sequence is MSATYTDLREKLQSLNRDSPKEVRKRKQPASDTEEEDEAGSEPEAEEEEARKVRSGIRQMRLFSPDECAAIESKIDEVVSRADKGLYQEHTVDRAPLRNKYFFGEGYTYGAQLQRRGPGQERLYPKGEVDEIPGWVHELVIRRLVERRIIPEGFVNSAVINDYQPGGCIVSHVDPIHIFERPIVSVSFFSDSALCFGCKFQFKPIRVSEPVFFLPVRRGSVTVLSGYAADEITHCIRPQDIKERRAVVILRKTRTEAPRLEMKSLSSSYQPERLQGSNRQHILKPKRSHRKADPDAAHRPRILEMDKEENRRSVLLPKQRRRSHFSSENYWRRSHDHVDTYTETGEDEGSPVRKVKMRRH.

The interval 1 to 53 (MSATYTDLREKLQSLNRDSPKEVRKRKQPASDTEEEDEAGSEPEAEEEEARKV) is disordered. Positions 7-22 (DLREKLQSLNRDSPKE) are enriched in basic and acidic residues. Over residues 32 to 48 (DTEEEDEAGSEPEAEEE) the composition is skewed to acidic residues. Tyr-107 is an active-site residue. The 2-oxoglutarate site is built by Asn-161, Tyr-163, His-172, His-234, and Arg-245. A disulfide bridge links Cys-198 with Cys-235. The interval 261–360 (EMKSLSSSYQ…PVRKVKMRRH (100 aa)) is disordered. The segment covering 264-280 (SLSSSYQPERLQGSNRQ) has biased composition (polar residues). Basic residues predominate over residues 281-290 (HILKPKRSHR). 2 stretches are compositionally biased toward basic and acidic residues: residues 291–312 (KADPDAAHRPRILEMDKEENRR) and 330–340 (YWRRSHDHVDT).

Belongs to the alkB family. In terms of assembly, monomer. Fe(2+) is required as a cofactor.

The protein resides in the nucleus speckle. It catalyses the reaction an N(6)-methyladenosine in mRNA + 2-oxoglutarate + O2 = an adenosine in mRNA + formaldehyde + succinate + CO2. Its function is as follows. Dioxygenase that specifically demethylates N(6)-methyladenosine (m6A) RNA, the most prevalent internal modification of messenger RNA (mRNA) in higher eukaryotes. Demethylates RNA by oxidative demethylation, which requires molecular oxygen, alpha-ketoglutarate and iron. Demethylation of m6A mRNA affects mRNA processing, translation and export. This is RNA demethylase ALKBH5 (alkbh5) from Xenopus laevis (African clawed frog).